Consider the following 262-residue polypeptide: Ribosomal RNA small subunit methyltransferase A (262 aa).

S-adenosyl-L-methionine is bound by residues asparagine 20, leucine 22, glycine 47, glutamate 68, aspartate 90, and asparagine 110.

It belongs to the class I-like SAM-binding methyltransferase superfamily. rRNA adenine N(6)-methyltransferase family. RsmA subfamily.

Its subcellular location is the cytoplasm. The catalysed reaction is adenosine(1518)/adenosine(1519) in 16S rRNA + 4 S-adenosyl-L-methionine = N(6)-dimethyladenosine(1518)/N(6)-dimethyladenosine(1519) in 16S rRNA + 4 S-adenosyl-L-homocysteine + 4 H(+). Its function is as follows. Specifically dimethylates two adjacent adenosines (A1518 and A1519) in the loop of a conserved hairpin near the 3'-end of 16S rRNA in the 30S particle. May play a critical role in biogenesis of 30S subunits. This is Ribosomal RNA small subunit methyltransferase A from Chlorobium phaeobacteroides (strain BS1).